The chain runs to 353 residues: Glutamine synthetase nodule isozyme (353 aa).

A GS beta-grasp domain is found at 19 to 99 (IIAEYIWVGG…VMCDTYTPAG (81 aa)). The GS catalytic domain occupies 106–353 (KRHAAAKIFS…TSMIAETTLL (248 aa)).

The protein belongs to the glutamine synthetase family. Homooctamer.

The protein resides in the cytoplasm. It carries out the reaction L-glutamate + NH4(+) + ATP = L-glutamine + ADP + phosphate + H(+). The chain is Glutamine synthetase nodule isozyme from Lupinus luteus (European yellow lupine).